A 527-amino-acid polypeptide reads, in one-letter code: Phosphoenolpyruvate carboxykinase (ATP) (527 aa).

Positions 56, 191, and 197 each coordinate substrate. ATP-binding positions include K197, H216, and 232–240 (GLSGTGKTT). Mn(2+)-binding residues include K197 and H216. Residue D253 coordinates Mn(2+). Residues E281, R318, 437-438 (RI), and T443 each bind ATP. R318 is a binding site for substrate.

It belongs to the phosphoenolpyruvate carboxykinase (ATP) family. Requires Mn(2+) as cofactor.

It localises to the cytoplasm. The enzyme catalyses oxaloacetate + ATP = phosphoenolpyruvate + ADP + CO2. Its pathway is carbohydrate biosynthesis; gluconeogenesis. In terms of biological role, involved in the gluconeogenesis. Catalyzes the conversion of oxaloacetate (OAA) to phosphoenolpyruvate (PEP) through direct phosphoryl transfer between the nucleoside triphosphate and OAA. The protein is Phosphoenolpyruvate carboxykinase (ATP) of Shouchella clausii (strain KSM-K16) (Alkalihalobacillus clausii).